Reading from the N-terminus, the 454-residue chain is Putative F-box/LRR-repeat protein At3g58880 (454 aa).

Residues 2–48 enclose the F-box domain; sequence VDLVSSLPDDLLGHILSLLTTKEAALTSILSKRWRYLIAFVPYLEFD. 7 LRR repeats span residues 77–102, 144–168, 169–194, 214–240, 270–301, 303–327, and 328–353; these read LALH…DLLN, SGCR…TLDS, VSWS…NLAN, IKSV…NYTA, LVSV…YLSP, TLQV…VIES, and SMDI…VIKG.

The sequence is that of Putative F-box/LRR-repeat protein At3g58880 from Arabidopsis thaliana (Mouse-ear cress).